The following is a 114-amino-acid chain: T cell receptor beta variable 28 (114 aa).

The signal sequence occupies residues Met1–Ser26. One can recognise an Ig-like domain in the interval Ser27–Leu114. Cysteines 42 and 110 form a disulfide. Residue Asn103 is glycosylated (N-linked (GlcNAc...) asparagine).

In terms of assembly, alpha-beta TR is a heterodimer composed of an alpha and beta chain; disulfide-linked. The alpha-beta TR is associated with the transmembrane signaling CD3 coreceptor proteins to form the TR-CD3 (TcR or TCR). The assembly of alpha-beta TR heterodimers with CD3 occurs in the endoplasmic reticulum where a single alpha-beta TR heterodimer associates with one CD3D-CD3E heterodimer, one CD3G-CD3E heterodimer and one CD247 homodimer forming a stable octameric structure. CD3D-CD3E and CD3G-CD3E heterodimers preferentially associate with TR alpha and TR beta chains, respectively. The association of the CD247 homodimer is the last step of TcR assembly in the endoplasmic reticulum and is required for transport to the cell surface.

It localises to the cell membrane. Its function is as follows. V region of the variable domain of T cell receptor (TR) beta chain that participates in the antigen recognition. Alpha-beta T cell receptors are antigen specific receptors which are essential to the immune response and are present on the cell surface of T lymphocytes. Recognize peptide-major histocompatibility (MH) (pMH) complexes that are displayed by antigen presenting cells (APC), a prerequisite for efficient T cell adaptive immunity against pathogens. Binding of alpha-beta TR to pMH complex initiates TR-CD3 clustering on the cell surface and intracellular activation of LCK that phosphorylates the ITAM motifs of CD3G, CD3D, CD3E and CD247 enabling the recruitment of ZAP70. In turn ZAP70 phosphorylates LAT, which recruits numerous signaling molecules to form the LAT signalosome. The LAT signalosome propagates signal branching to three major signaling pathways, the calcium, the mitogen-activated protein kinase (MAPK) kinase and the nuclear factor NF-kappa-B (NF-kB) pathways, leading to the mobilization of transcription factors that are critical for gene expression and essential for T cell growth and differentiation. The T cell repertoire is generated in the thymus, by V-(D)-J rearrangement. This repertoire is then shaped by intrathymic selection events to generate a peripheral T cell pool of self-MH restricted, non-autoaggressive T cells. Post-thymic interaction of alpha-beta TR with the pMH complexes shapes TR structural and functional avidity. The polypeptide is T cell receptor beta variable 28 (Homo sapiens (Human)).